The following is a 194-amino-acid chain: 5-formyltetrahydrofolate cyclo-ligase (194 aa).

ATP contacts are provided by residues Lys-6–Arg-10, Gly-139–Asp-146, and Asp-177.

It belongs to the 5-formyltetrahydrofolate cyclo-ligase family.

The enzyme catalyses (6S)-5-formyl-5,6,7,8-tetrahydrofolate + ATP = (6R)-5,10-methenyltetrahydrofolate + ADP + phosphate. The protein operates within one-carbon metabolism; tetrahydrofolate interconversion. In terms of biological role, involved in the removal of 5-formyltetrahydrofolate. In vitro, it is a potent inhibitor of various folate-dependent enzymes in the C1 metabolism network and in vivo it might function as a folate storage. 5-formyltetrahydrofolate is also used as an antifolate rescue agent in cancer chemotherapy. Catalyzes the irreversible ATP-dependent transformation of 5-formyltetrahydrofolate (5-CHO-THF) to form 5,10-methenyltetrahydrofolate (5,10-CH=THF). The reverse reaction is catalyzed by the serine hydroxymethyltransferase GlyA (SHMT). The sequence is that of 5-formyltetrahydrofolate cyclo-ligase from Mycolicibacterium smegmatis (strain ATCC 700084 / mc(2)155) (Mycobacterium smegmatis).